We begin with the raw amino-acid sequence, 198 residues long: NADH-quinone oxidoreductase subunit B (198 aa).

The segment covering 1–20 (MGLNPTQVSTSGSPQVSQPA) has biased composition (polar residues). Positions 1–29 (MGLNPTQVSTSGSPQVSQPATGVLDPRTG) are disordered. 4 residues coordinate [4Fe-4S] cluster: cysteine 77, cysteine 78, cysteine 142, and cysteine 172.

Belongs to the complex I 20 kDa subunit family. As to quaternary structure, NDH-1 is composed of 14 different subunits. Subunits NuoB, C, D, E, F, and G constitute the peripheral sector of the complex. Requires [4Fe-4S] cluster as cofactor.

It localises to the cell inner membrane. It catalyses the reaction a quinone + NADH + 5 H(+)(in) = a quinol + NAD(+) + 4 H(+)(out). NDH-1 shuttles electrons from NADH, via FMN and iron-sulfur (Fe-S) centers, to quinones in the respiratory chain. The immediate electron acceptor for the enzyme in this species is believed to be ubiquinone. Couples the redox reaction to proton translocation (for every two electrons transferred, four hydrogen ions are translocated across the cytoplasmic membrane), and thus conserves the redox energy in a proton gradient. This is NADH-quinone oxidoreductase subunit B from Afipia carboxidovorans (strain ATCC 49405 / DSM 1227 / KCTC 32145 / OM5) (Oligotropha carboxidovorans).